We begin with the raw amino-acid sequence, 191 residues long: Protein GrpE (191 aa).

Positions 1-21 (MSDKKKNAEEFEETFSDKTSE) are enriched in basic and acidic residues. Residues 1-39 (MSDKKKNAEEFEETFSDKTSEDESTVENETVEENENEDV) form a disordered region. Over residues 22–38 (DESTVENETVEENENED) the composition is skewed to acidic residues.

This sequence belongs to the GrpE family. As to quaternary structure, homodimer.

The protein resides in the cytoplasm. Functionally, participates actively in the response to hyperosmotic and heat shock by preventing the aggregation of stress-denatured proteins, in association with DnaK and GrpE. It is the nucleotide exchange factor for DnaK and may function as a thermosensor. Unfolded proteins bind initially to DnaJ; upon interaction with the DnaJ-bound protein, DnaK hydrolyzes its bound ATP, resulting in the formation of a stable complex. GrpE releases ADP from DnaK; ATP binding to DnaK triggers the release of the substrate protein, thus completing the reaction cycle. Several rounds of ATP-dependent interactions between DnaJ, DnaK and GrpE are required for fully efficient folding. In Tetragenococcus halophilus (Pediococcus halophilus), this protein is Protein GrpE.